We begin with the raw amino-acid sequence, 269 residues long: 3-methyl-2-oxobutanoate hydroxymethyltransferase (269 aa).

D43 and D82 together coordinate Mg(2+). 3-methyl-2-oxobutanoate contacts are provided by residues 43–44, D82, and K110; that span reads DS. Mg(2+) is bound at residue E112. The Proton acceptor role is filled by E179.

This sequence belongs to the PanB family. As to quaternary structure, homodecamer; pentamer of dimers. Requires Mg(2+) as cofactor.

Its subcellular location is the cytoplasm. The catalysed reaction is 3-methyl-2-oxobutanoate + (6R)-5,10-methylene-5,6,7,8-tetrahydrofolate + H2O = 2-dehydropantoate + (6S)-5,6,7,8-tetrahydrofolate. It participates in cofactor biosynthesis; (R)-pantothenate biosynthesis; (R)-pantoate from 3-methyl-2-oxobutanoate: step 1/2. Functionally, catalyzes the reversible reaction in which hydroxymethyl group from 5,10-methylenetetrahydrofolate is transferred onto alpha-ketoisovalerate to form ketopantoate. The sequence is that of 3-methyl-2-oxobutanoate hydroxymethyltransferase from Acinetobacter baumannii (strain AB307-0294).